The sequence spans 245 residues: MENKPILSFEKVSIIYKKAPLLQNISFKVMAKENVCLLGKSGVGKSSLLNSVTNTKIVKSGLVYFDGVASNKKEYKKLKKQCSYLDQIPNLIDTDYVYEAILRSAKQKLTWLQKLICFEPKWIKDKILAILKEVNLNDYVSCIIKDLSAGQKQRVEIAKLFFKSPKLLLVDEPTTGLDPLTASKIMDLITDFVKREKITLVFVTHDIDLALKYSTRIIALKNHALVLDRLTEKLTKEQLYKIYDN.

The region spanning 7–245 (LSFEKVSIIY…KEQLYKIYDN (239 aa)) is the ABC transporter domain. 39–46 (GKSGVGKS) provides a ligand contact to ATP.

Belongs to the ABC transporter superfamily.

Its function is as follows. Part of a high-affinity transport system. The sequence is that of Probable ABC transporter ATP-binding protein p29 (p29) from Mycoplasma genitalium (strain ATCC 33530 / DSM 19775 / NCTC 10195 / G37) (Mycoplasmoides genitalium).